We begin with the raw amino-acid sequence, 210 residues long: Outer-membrane lipoprotein LolB (210 aa).

Positions 1 to 29 (MSLISNNEERSLRVRYCIAIALSALLISG) are cleaved as a signal peptide. Cys30 carries N-palmitoyl cysteine lipidation. Cys30 is lipidated: S-diacylglycerol cysteine.

The protein belongs to the LolB family. As to quaternary structure, monomer.

Its subcellular location is the cell outer membrane. In terms of biological role, plays a critical role in the incorporation of lipoproteins in the outer membrane after they are released by the LolA protein. In Coxiella burnetii (strain CbuG_Q212) (Coxiella burnetii (strain Q212)), this protein is Outer-membrane lipoprotein LolB.